The primary structure comprises 310 residues: Phosphoribosylaminoimidazole-succinocarboxamide synthase (310 aa).

Belongs to the SAICAR synthetase family.

It carries out the reaction 5-amino-1-(5-phospho-D-ribosyl)imidazole-4-carboxylate + L-aspartate + ATP = (2S)-2-[5-amino-1-(5-phospho-beta-D-ribosyl)imidazole-4-carboxamido]succinate + ADP + phosphate + 2 H(+). Its pathway is purine metabolism; IMP biosynthesis via de novo pathway; 5-amino-1-(5-phospho-D-ribosyl)imidazole-4-carboxamide from 5-amino-1-(5-phospho-D-ribosyl)imidazole-4-carboxylate: step 1/2. The protein is Phosphoribosylaminoimidazole-succinocarboxamide synthase of Cytophaga hutchinsonii (strain ATCC 33406 / DSM 1761 / CIP 103989 / NBRC 15051 / NCIMB 9469 / D465).